The following is a 165-amino-acid chain: Transcription antitermination protein NusB (165 aa).

The tract at residues 1 to 27 is disordered; it reads MISDDTDQFNPRDAKSPEAAKGKSAKR. The span at 10–21 shows a compositional bias: basic and acidic residues; the sequence is NPRDAKSPEAAK.

The protein belongs to the NusB family.

In terms of biological role, involved in transcription antitermination. Required for transcription of ribosomal RNA (rRNA) genes. Binds specifically to the boxA antiterminator sequence of the ribosomal RNA (rrn) operons. The polypeptide is Transcription antitermination protein NusB (Pseudomonas savastanoi pv. phaseolicola (strain 1448A / Race 6) (Pseudomonas syringae pv. phaseolicola (strain 1448A / Race 6))).